Reading from the N-terminus, the 370-residue chain is Cytochrome b (370 aa).

Transmembrane regions (helical) follow at residues 25–45 (FGSM…FLAI), 69–90 (WIMQ…YTHI), 105–125 (WLSG…GYVL), and 170–190 (FFAL…IHIV). 2 residues coordinate heme b: His75 and His89. The heme b site is built by His174 and His188. His193 serves as a coordination point for a ubiquinone. Transmembrane regions (helical) follow at residues 218-238 (YKDM…MSFM), 280-300 (LGGT…PFTH), 312-332 (LTQI…WTAT), and 339-358 (FITI…IINP).

The protein belongs to the cytochrome b family. As to quaternary structure, the cytochrome bc1 complex contains 3 respiratory subunits (MT-CYB, CYC1 and UQCRFS1), 2 core proteins (UQCRC1 and UQCRC2) and probably 6 low-molecular weight proteins. The cofactor is heme b.

The protein resides in the mitochondrion inner membrane. Component of the ubiquinol-cytochrome c reductase complex (complex III or cytochrome b-c1 complex) that is part of the mitochondrial respiratory chain. The b-c1 complex mediates electron transfer from ubiquinol to cytochrome c. Contributes to the generation of a proton gradient across the mitochondrial membrane that is then used for ATP synthesis. The chain is Cytochrome b (MT-CYB) from Micropechis ikaheca (New Guinean small-eyed snake).